A 59-amino-acid polypeptide reads, in one-letter code: Large ribosomal subunit protein bL32 (59 aa).

The segment covering 1–16 has biased composition (basic residues); it reads MAVPKRKTSPSKRGMR. Residues 1–59 are disordered; that stretch reads MAVPKRKTSPSKRGMRRSADALKAPTYVEDKNSGELRRPHHIDLKSGMYRGRQVLEAKE. A compositionally biased stretch (basic and acidic residues) spans 28–44; the sequence is VEDKNSGELRRPHHIDL.

It belongs to the bacterial ribosomal protein bL32 family.

The chain is Large ribosomal subunit protein bL32 from Brucella anthropi (strain ATCC 49188 / DSM 6882 / CCUG 24695 / JCM 21032 / LMG 3331 / NBRC 15819 / NCTC 12168 / Alc 37) (Ochrobactrum anthropi).